The primary structure comprises 445 residues: Plasmid recombination enzyme (445 aa).

The DNA site is built by Tyr-45 and Tyr-113.

This sequence belongs to the plasmid mobilization pre family.

This Bacillus thuringiensis protein is Plasmid recombination enzyme.